The primary structure comprises 156 residues: Small ribosomal subunit protein uS7 (156 aa).

Belongs to the universal ribosomal protein uS7 family. As to quaternary structure, part of the 30S ribosomal subunit. Contacts proteins S9 and S11.

In terms of biological role, one of the primary rRNA binding proteins, it binds directly to 16S rRNA where it nucleates assembly of the head domain of the 30S subunit. Is located at the subunit interface close to the decoding center, probably blocks exit of the E-site tRNA. This Rhizobium rhizogenes (strain K84 / ATCC BAA-868) (Agrobacterium radiobacter) protein is Small ribosomal subunit protein uS7.